We begin with the raw amino-acid sequence, 206 residues long: Dephospho-CoA kinase (206 aa).

Positions 4–200 (TVALTGGIGS…ASYLKLASQF (197 aa)) constitute a DPCK domain. Position 12-17 (12-17 (GSGKST)) interacts with ATP.

It belongs to the CoaE family.

It is found in the cytoplasm. It catalyses the reaction 3'-dephospho-CoA + ATP = ADP + CoA + H(+). It participates in cofactor biosynthesis; coenzyme A biosynthesis; CoA from (R)-pantothenate: step 5/5. Its function is as follows. Catalyzes the phosphorylation of the 3'-hydroxyl group of dephosphocoenzyme A to form coenzyme A. This Salmonella paratyphi A (strain ATCC 9150 / SARB42) protein is Dephospho-CoA kinase.